The sequence spans 270 residues: Putative hydro-lyase Reut_A2449 (270 aa).

It belongs to the D-glutamate cyclase family.

In Cupriavidus pinatubonensis (strain JMP 134 / LMG 1197) (Cupriavidus necator (strain JMP 134)), this protein is Putative hydro-lyase Reut_A2449.